We begin with the raw amino-acid sequence, 199 residues long: MQYPEPIAKLIDSYMKLPGIGGKTATRLAFYTIDMNGDDVTEFAKSLIAAKRDLHFCSICGNITEDDPCVICKDKSRDQSTVLVVEEAKDVMAMEKIKEYNGLYHVLHGVLSPIDGKGPEDINIASLLKRLQQNEAIKEVIIATNATPEGEATAMYISRLVKPAGIKVTRLAHGLSVGSDIQYADEMTLFKAVEGRQEM.

The C4-type zinc finger occupies C57 to C72. A Toprim domain is found at S80–S176.

The protein belongs to the RecR family.

May play a role in DNA repair. It seems to be involved in an RecBC-independent recombinational process of DNA repair. It may act with RecF and RecO. In Lactiplantibacillus plantarum (strain ATCC BAA-793 / NCIMB 8826 / WCFS1) (Lactobacillus plantarum), this protein is Recombination protein RecR.